We begin with the raw amino-acid sequence, 1335 residues long: Membrane-associated phosphatidylinositol transfer protein 2 (1335 aa).

Disordered regions lie at residues 32-51 (ETHG…YTDG) and 262-341 (EEGP…SEEE). Residues 275-286 (KDQASGTTSDPG) show a composition bias toward polar residues. The segment covering 299–319 (KQWSTSSKSSRSSKRGASPSR) has biased composition (low complexity). Residues serine 334, serine 338, serine 365, and serine 586 each carry the phosphoserine modification. The tract at residues 606-657 (HCSGGSGGGGSGGSSLESSRHLSRSNIDIPRSNGTEDSRRQLPRKRSDSSTY) is disordered. Gly residues predominate over residues 609–618 (GGSGGGGSGG). The residue at position 630 (serine 630) is a Phosphoserine. A compositionally biased stretch (basic and acidic residues) spans 639-653 (GTEDSRRQLPRKRSD). A phosphoserine mark is found at serine 686, serine 687, and serine 688. Positions 701–949 (FDFEIADLFL…VSFLLRQVMR (249 aa)) constitute a DDHD domain. Omega-N-methylarginine is present on arginine 814. The disordered stretch occupies residues 861–880 (ALPPPSPTTQGPRARARQVS). Residue serine 1263 is modified to Phosphoserine. The interval 1282 to 1313 (TISAQPSGPSHRHDRTQTQMDSEQRGQRSMSV) is disordered. The segment covering 1298–1313 (QTQMDSEQRGQRSMSV) has biased composition (polar residues).

The protein belongs to the PtdIns transfer protein family. PI transfer class IIA subfamily. As to quaternary structure, interacts with CPNE4 (via VWFA domain). Interacts with PTK2B via its C-terminus. In terms of tissue distribution, detected in retina and in the dentate gyrus of the cerebellum.

Its subcellular location is the endomembrane system. The protein resides in the cytoplasm. It localises to the cytoskeleton. Functionally, catalyzes the transfer of phosphatidylinositol and phosphatidylcholine between membranes (in vitro). Binds calcium ions. This Mus musculus (Mouse) protein is Membrane-associated phosphatidylinositol transfer protein 2 (Pitpnm2).